Reading from the N-terminus, the 614-residue chain is Spastin (614 aa).

The tract at residues 1–45 is disordered; that stretch reads MNSPGGRGKKKGSGGPSSPVPPRPPPPCQARSRPAPKPAPPPQSP. Residues 1–50 form a required for nuclear localization region; sequence MNSPGGRGKKKGSGGPSSPVPPRPPPPCQARSRPAPKPAPPPQSPHKRNL. Residues 1–56 are Cytoplasmic-facing; that stretch reads MNSPGGRGKKKGSGGPSSPVPPRPPPPCQARSRPAPKPAPPPQSPHKRNLYYFSYP. A required for interaction with ATL1 region spans residues 1-80; sequence MNSPGGRGKK…LGLLFVWLCQ (80 aa). The required for midbody localization stretch occupies residues 1 to 192; sequence MNSPGGRGKK…LVMAKDRLQL (192 aa). Residues 1-298 form a required for interaction with RTN1 region; it reads MNSPGGRGKK…STPKTNRTNK (298 aa). Positions 4–11 match the Nuclear localization signal motif; sequence PGGRGKKK. Pro residues-rich tracts occupy residues 18-28 and 35-44; these read SPVPPRPPPPC and APKPAPPPQS. The required for interaction with SSNA1 and microtubules stretch occupies residues 50 to 87; sequence LYYFSYPLFLGFALLRLVAFHLGLLFVWLCQRFSRALM. The helical intramembrane region spans 57 to 77; sequence LFLGFALLRLVAFHLGLLFVW. Residues 59 to 67 carry the Nuclear export signal motif; sequence LGFALLRLV. The Cytoplasmic segment spans residues 78 to 614; sequence LCQRFSRALM…WNKDFGDTTV (537 aa). The sufficient for interaction with CHMP1B stretch occupies residues 110 to 194; that stretch reads EAERVRAFHK…MAKDRLQLLE (85 aa). Residues 112–198 form a required for interaction with microtubules region; it reads ERVRAFHKQA…RLQLLEKLQP (87 aa). Residues 118-193 enclose the MIT domain; that stretch reads HKQAFEYISV…VMAKDRLQLL (76 aa). The interval 220-310 is disordered; that stretch reads NGHLQSESGA…TPTTAARKKK (91 aa). The interval 226-614 is sufficient for microtubule severing; the sequence is ESGAVPKRKD…WNKDFGDTTV (389 aa). Phosphoserine is present on residues Ser243 and Ser266. Positions 268-326 are required for interaction with microtubules and microtubule severing; that stretch reads SGLSMVSGVRQGPGSAAATHKSTPKTNRTNKPSTPTTAARKKKDLKNFRNVDSNLANLI. Over residues 287-304 the composition is skewed to polar residues; the sequence is HKSTPKTNRTNKPSTPTT. Thr304 is subject to Phosphothreonine. A Nuclear localization signal motif is present at residues 307-310; sequence RKKK. ATP is bound at residue 380–387; it reads GPPGNGKT. At Ser595 the chain carries Phosphoserine.

The protein belongs to the AAA ATPase family. Spastin subfamily. In terms of assembly, homohexamer. Mostly monomeric, but assembles into hexameric structure for short periods of time. Oligomerization seems to be a prerequisite for catalytic activity. Binding to ATP in a cleft between two adjacent subunits stabilizes the homohexameric form. Binds to microtubules at least in part via the alpha-tubulin and beta-tubulin tails. The hexamer adopts a ring conformation through which microtubules pass prior to being severed. Does not interact strongly with tubulin heterodimers. Interacts (via MIT domain) with CHMP1B; the interaction is direct. Interacts with SSNA1. Interacts with ATL1. Interacts with RTN1. Interacts with ZFYVE27. Interacts with REEP1. Interacts (via MIT domain) with IST1.

It is found in the membrane. Its subcellular location is the endoplasmic reticulum. The protein resides in the midbody. It localises to the cytoplasm. The protein localises to the cytoskeleton. It is found in the microtubule organizing center. Its subcellular location is the centrosome. The protein resides in the perinuclear region. It localises to the nucleus. The protein localises to the spindle. It is found in the cell projection. Its subcellular location is the axon. The enzyme catalyses n ATP + n H2O + a microtubule = n ADP + n phosphate + (n+1) alpha/beta tubulin heterodimers.. With respect to regulation, allosteric enzyme with a cooperative mechanism; at least two neighbor subunits influence each other strongly in spastin hexamers. Microtubule binding promotes cooperative interactions among spastin subunits. ATP-dependent microtubule severing protein that specifically recognizes and cuts microtubules that are polyglutamylated. Preferentially recognizes and acts on microtubules decorated with short polyglutamate tails: severing activity increases as the number of glutamates per tubulin rises from one to eight, but decreases beyond this glutamylation threshold. Severing activity is not dependent on tubulin acetylation or detyrosination. Microtubule severing promotes reorganization of cellular microtubule arrays and the release of microtubules from the centrosome following nucleation. It is critical for the biogenesis and maintenance of complex microtubule arrays in axons, spindles and cilia. SPAST is involved in abscission step of cytokinesis and nuclear envelope reassembly during anaphase in cooperation with the ESCRT-III complex. Recruited at the midbody, probably by IST1, and participates in membrane fission during abscission together with the ESCRT-III complex. Recruited to the nuclear membrane by IST1 and mediates microtubule severing, promoting nuclear envelope sealing and mitotic spindle disassembly during late anaphase. Required for membrane traffic from the endoplasmic reticulum (ER) to the Golgi and endosome recycling. Recruited by IST1 to endosomes and regulates early endosomal tubulation and recycling by mediating microtubule severing. Probably plays a role in axon growth and the formation of axonal branches. This Bos taurus (Bovine) protein is Spastin.